The following is a 192-amino-acid chain: Phosphoheptose isomerase (192 aa).

In terms of domain architecture, SIS spans 37 to 192 (ITDSFKNGGK…MMLIEFEMAK (156 aa)). 52-54 (NGG) provides a ligand contact to substrate. Zn(2+)-binding residues include His-61 and Glu-65. Substrate is bound by residues Glu-65, 93–94 (ND), 119–121 (STS), Ser-124, and Gln-172. The Zn(2+) site is built by Gln-172 and His-180.

It belongs to the SIS family. GmhA subfamily. Homotetramer. Zn(2+) is required as a cofactor.

It is found in the cytoplasm. It carries out the reaction 2 D-sedoheptulose 7-phosphate = D-glycero-alpha-D-manno-heptose 7-phosphate + D-glycero-beta-D-manno-heptose 7-phosphate. The protein operates within carbohydrate biosynthesis; D-glycero-D-manno-heptose 7-phosphate biosynthesis; D-glycero-alpha-D-manno-heptose 7-phosphate and D-glycero-beta-D-manno-heptose 7-phosphate from sedoheptulose 7-phosphate: step 1/1. Catalyzes the isomerization of sedoheptulose 7-phosphate in D-glycero-D-manno-heptose 7-phosphate. The protein is Phosphoheptose isomerase of Glaesserella parasuis serovar 5 (strain SH0165) (Haemophilus parasuis).